The chain runs to 194 residues: MRKFVAFFVIVALAALLAGCGGQGEQEQKPSEQKTTTTVAESKGIETLSDLYNSKKMVHGTAKVTLQGETTTVEFWYYFDMPNKETLLRYEGEQGGMGKMTAIIKNKYSGTTLTQTMYMKSEKMEAQGCDWIVITQTSTISQSESNIGDEPVEDAFKSTFASQGNVWEYEVETVDYNPSLFQPDGKVCQFSYGS.

The N-terminal stretch at 1–24 is a signal peptide; that stretch reads MRKFVAFFVIVALAALLAGCGGQG.

This is an uncharacterized protein from Archaeoglobus fulgidus (strain ATCC 49558 / DSM 4304 / JCM 9628 / NBRC 100126 / VC-16).